Consider the following 192-residue polypeptide: Fe/S biogenesis protein NfuA (192 aa).

[4Fe-4S] cluster is bound by residues cysteine 149 and cysteine 152.

Belongs to the NfuA family. Homodimer. It depends on [4Fe-4S] cluster as a cofactor.

In terms of biological role, involved in iron-sulfur cluster biogenesis. Binds a 4Fe-4S cluster, can transfer this cluster to apoproteins, and thereby intervenes in the maturation of Fe/S proteins. Could also act as a scaffold/chaperone for damaged Fe/S proteins. This is Fe/S biogenesis protein NfuA from Shewanella denitrificans (strain OS217 / ATCC BAA-1090 / DSM 15013).